The sequence spans 192 residues: Beta-glucosidase (192 aa).

Belongs to the glycosyl hydrolase 3 family.

It carries out the reaction Hydrolysis of terminal, non-reducing beta-D-glucosyl residues with release of beta-D-glucose.. The protein operates within glycan metabolism; cellulose degradation. In Schizophyllum commune (Split gill fungus), this protein is Beta-glucosidase.